We begin with the raw amino-acid sequence, 486 residues long: MAPVRGILGLQRAVSIWKESNRLTPALRSFSTQAASTSTTPQPPPPPPPPEKTHFGGLKDEDRIFTNLYGLHDPFLKGAMKRGDWHRTKDLVLKGTDWIVNEMKKSGLRGRGGAGFPSGLKWSFMPKVSDGRPSYLVVNADESEPGTCKDREIMRHDPHKLLEGCLIAGVGMRASAAYIYIRGEYVNERLNLEKARREAYAAGLLGKNACGSGYDFEVYIHFGAGAYICGEETALLESLEGKQGKPRLKPPFPANAGLYGCPTTVTNVETVAVSPTILRRGPEWFSSFGRKNNAGTKLFCISGHVNKPCTVEEEMSIPLKELIERHCGGVRGGWDNLLAIIPGGSSVPLIPKNICEDVLMDFDALKAVQSGLGTAAVIVMDKSTDVVDAIARLSYFYKHESCGQCTPCREGTGWLWMIMERMKVGNAKLEEIDMLQEVTKQIEGHTICALGDAAAWPVQGLIRHFRPELERRIRERAERELLQAAA.

Residues 1-30 (MAPVRGILGLQRAVSIWKESNRLTPALRSF) constitute a mitochondrion transit peptide. Low complexity predominate over residues 31-40 (STQAASTSTT). Residues 31–57 (STQAASTSTTPQPPPPPPPPEKTHFGG) form a disordered region. Residues 41–50 (PQPPPPPPPP) are compositionally biased toward pro residues. An NADH-binding site is contributed by 110–119 (GRGGAGFPSG). An FMN-binding site is contributed by 222–270 (FGAGAYICGEETALLESLEGKQGKPRLKPPFPANAGLYGCPTTVTNVET). 4 residues coordinate [4Fe-4S] cluster: cysteine 402, cysteine 405, cysteine 408, and cysteine 448.

This sequence belongs to the complex I 51 kDa subunit family. As to quaternary structure, complex I is composed of at least 49 different subunits. This is a component of the flavoprotein-sulfur (FP) fragment of the enzyme. It depends on FMN as a cofactor. [4Fe-4S] cluster is required as a cofactor.

It is found in the mitochondrion inner membrane. It carries out the reaction a ubiquinone + NADH + 5 H(+)(in) = a ubiquinol + NAD(+) + 4 H(+)(out). Its function is as follows. Core subunit of the mitochondrial membrane respiratory chain NADH dehydrogenase (Complex I) that is believed to belong to the minimal assembly required for catalysis. Complex I functions in the transfer of electrons from NADH to the respiratory chain. The immediate electron acceptor for the enzyme is believed to be ubiquinone. This is NADH dehydrogenase [ubiquinone] flavoprotein 1, mitochondrial from Arabidopsis thaliana (Mouse-ear cress).